The following is a 237-amino-acid chain: BTB/POZ domain-containing protein KCTD6 (237 aa).

Residues 1–104 (MDNGDWGYMM…FYQIEPLIQC (104 aa)) are interaction with ANK1 isoform Mu7. The tract at residues 10 to 110 (MSDPVTLNVG…LIQCLNDPRP (101 aa)) is interaction with CUL3. Residues 12-81 (DPVTLNVGGH…LRTSELTLPL (70 aa)) form the BTB domain. Residues 113 to 187 (PMDTFEEVVE…TFGPCDYHQE (75 aa)) form an interaction with USP21 region.

Homopentamer. Interacts with KCTD11; KCTD6 and KCTD11 may associate in heteropentameric assemblies. Interacts (via BTB domain) with CUL3; initially a 4:4 stoichiometry has been reported, however, electron microscopy revealed pentameric states with a five-pointed pinwheel shape. The interaction with CUL3 is indicative for a participation in a BCR (BTB-CUL3-RBX1) E3 ubiquitin-protein ligase complex. Interacts with HDAC1; probably indirect as the interaction requires the presence of KCTD11. Interacts with USP21 (preferentially catalytic inactive form). Interacts with ANK1 isoform Mu7; detected in striated muscle. Interacts with USP11. In terms of tissue distribution, highly expressed in cerebellum and brain.

It localises to the cytoplasm. Its subcellular location is the myofibril. The protein resides in the sarcomere. The protein localises to the m line. The protein operates within protein modification; protein ubiquitination. Functionally, probable substrate-specific adapter of a BCR (BTB-CUL3-RBX1) E3 ubiquitin-protein ligase complex mediating the ubiquitination and subsequent proteasomal degradation of target proteins. Promotes the ubiquitination of HDAC1; the function seems to depend on KCTD11:KCTD6 oligomerization. Can function as antagonist of the Hedgehog pathway by affecting the nuclear transfer of transcription factor GLI1; the function probably occurs via HDAC1 down-regulation, keeping GLI1 acetylated and inactive. Inhibits cell growth and tumorigenicity of medulloblastoma (MDB). Involved in regulating protein levels of ANK1 isoform Mu7 probably implicating CUL3-dependent proteasomal degradation. The sequence is that of BTB/POZ domain-containing protein KCTD6 (Kctd6) from Mus musculus (Mouse).